The following is an 85-amino-acid chain: Putative defensin-like protein 142 (85 aa).

The signal sequence occupies residues 1 to 24; it reads MKKSFLFTFTVLTIFTILVIGVAP. 4 disulfides stabilise this stretch: C30–C78, C41–C63, C46–C73, and C50–C75.

The protein belongs to the DEFL family.

Its subcellular location is the secreted. The polypeptide is Putative defensin-like protein 142 (LCR34) (Arabidopsis thaliana (Mouse-ear cress)).